Reading from the N-terminus, the 207-residue chain is Ion-translocating oxidoreductase complex subunit B (207 aa).

The tract at residues 1 to 29 (MLDLSIIAYLLIAICLIALIFGALLGYFS) is hydrophobic. The 4Fe-4S domain occupies 35 to 93 (EADPIVDQIDAILPQSQCGQCGYPGCKPYAEAIANGDQITKCVPGGQPLVVKIAELMGV). [4Fe-4S] cluster is bound by residues cysteine 52, cysteine 55, cysteine 60, cysteine 76, cysteine 116, cysteine 119, cysteine 122, cysteine 126, cysteine 146, cysteine 149, cysteine 152, and cysteine 156. 4Fe-4S ferredoxin-type domains are found at residues 107–136 (KVAL…GTNK) and 137–166 (AMHT…MIKV).

Belongs to the 4Fe4S bacterial-type ferredoxin family. RnfB subfamily. The complex is composed of six subunits: RnfA, RnfB, RnfC, RnfD, RnfE and RnfG. [4Fe-4S] cluster is required as a cofactor.

It localises to the cell inner membrane. Part of a membrane-bound complex that couples electron transfer with translocation of ions across the membrane. In Haemophilus ducreyi (strain 35000HP / ATCC 700724), this protein is Ion-translocating oxidoreductase complex subunit B.